The primary structure comprises 445 residues: tRNA-2-methylthio-N(6)-dimethylallyladenosine synthase (445 aa).

Residues 2-117 (QGLYIKSYGC…LPELIVKARK (116 aa)) form the MTTase N-terminal domain. Residues Cys-11, Cys-47, Cys-80, Cys-157, Cys-161, and Cys-164 each coordinate [4Fe-4S] cluster. The 232-residue stretch at 143–374 (KNQKVSAFIS…QELVHKQQLE (232 aa)) folds into the Radical SAM core domain. The 65-residue stretch at 377 to 441 (KKMIGETHPV…KNHLTGIIPH (65 aa)) folds into the TRAM domain.

Belongs to the methylthiotransferase family. MiaB subfamily. Monomer. [4Fe-4S] cluster is required as a cofactor.

It localises to the cytoplasm. It catalyses the reaction N(6)-dimethylallyladenosine(37) in tRNA + (sulfur carrier)-SH + AH2 + 2 S-adenosyl-L-methionine = 2-methylsulfanyl-N(6)-dimethylallyladenosine(37) in tRNA + (sulfur carrier)-H + 5'-deoxyadenosine + L-methionine + A + S-adenosyl-L-homocysteine + 2 H(+). Catalyzes the methylthiolation of N6-(dimethylallyl)adenosine (i(6)A), leading to the formation of 2-methylthio-N6-(dimethylallyl)adenosine (ms(2)i(6)A) at position 37 in tRNAs that read codons beginning with uridine. The protein is tRNA-2-methylthio-N(6)-dimethylallyladenosine synthase of Ehrlichia ruminantium (strain Gardel).